A 147-amino-acid polypeptide reads, in one-letter code: Large ribosomal subunit protein uL11 (147 aa).

Belongs to the universal ribosomal protein uL11 family. Part of the ribosomal stalk of the 50S ribosomal subunit. Interacts with L10 and the large rRNA to form the base of the stalk. L10 forms an elongated spine to which L12 dimers bind in a sequential fashion forming a multimeric L10(L12)X complex. In terms of processing, one or more lysine residues are methylated.

Its function is as follows. Forms part of the ribosomal stalk which helps the ribosome interact with GTP-bound translation factors. The sequence is that of Large ribosomal subunit protein uL11 from Bacteroides fragilis (strain ATCC 25285 / DSM 2151 / CCUG 4856 / JCM 11019 / LMG 10263 / NCTC 9343 / Onslow / VPI 2553 / EN-2).